A 292-amino-acid chain; its full sequence is Shikimate dehydrogenase (NADP(+)) (292 aa).

Residues 25–27 (SKS) and T72 each bind shikimate. The active-site Proton acceptor is K76. N97 and D113 together coordinate shikimate. Residues 137-141 (GAGGA), 161-166 (NRTQSK), and M230 contribute to the NADP(+) site. Y232 provides a ligand contact to shikimate. An NADP(+)-binding site is contributed by G254.

It belongs to the shikimate dehydrogenase family. Homodimer.

The catalysed reaction is shikimate + NADP(+) = 3-dehydroshikimate + NADPH + H(+). It functions in the pathway metabolic intermediate biosynthesis; chorismate biosynthesis; chorismate from D-erythrose 4-phosphate and phosphoenolpyruvate: step 4/7. In terms of biological role, involved in the biosynthesis of the chorismate, which leads to the biosynthesis of aromatic amino acids. Catalyzes the reversible NADPH linked reduction of 3-dehydroshikimate (DHSA) to yield shikimate (SA). The chain is Shikimate dehydrogenase (NADP(+)) from Shewanella sp. (strain MR-7).